A 355-amino-acid chain; its full sequence is Zinc finger protein CONSTANS-LIKE 1 (355 aa).

Zn(2+) contacts are provided by cysteine 12, cysteine 15, cysteine 35, histidine 40, cysteine 55, cysteine 58, cysteine 78, and histidine 83. The segment at 12 to 54 (CDTCRSAACTVYCRADSAYLCSSCDAQVHAANRLASRHERVRV) adopts a B box-type 1; atypical zinc-finger fold. A B box-type 2; atypical zinc finger spans residues 55-97 (CQSCERAPAAFFCKADAASLCTTCDSEIHSANPLARRHQRVPI). A compositionally biased stretch (polar residues) spans 252-264 (ESTTSDATVSNPR). The disordered stretch occupies residues 252–281 (ESTTSDATVSNPRSPKAVTDQPPYPPAQML). A CCT domain is found at 286–328 (REARVLRYREKKKMRKFEKTIRYASRKAYAEKRPRIKGRFAKK).

The protein belongs to the CONSTANS family. Highly expressed in leaves and at lower levels in stems, flowers and siliques. Not detected in roots.

It localises to the nucleus. In terms of biological role, putative transcription factor that may be involved in the light input to the circadian clock but does not affect flowering time. This Arabidopsis thaliana (Mouse-ear cress) protein is Zinc finger protein CONSTANS-LIKE 1 (COL1).